We begin with the raw amino-acid sequence, 332 residues long: Biotin synthase (332 aa).

A Radical SAM core domain is found at 53 to 282; that stretch reads YFGKKVKLNM…SKEIRISGGR (230 aa). [4Fe-4S] cluster-binding residues include Cys-71, Cys-75, and Cys-78. [2Fe-2S] cluster is bound by residues Cys-115, Cys-147, Cys-207, and Arg-277.

Belongs to the radical SAM superfamily. Biotin synthase family. Homodimer. Requires [4Fe-4S] cluster as cofactor. It depends on [2Fe-2S] cluster as a cofactor.

It carries out the reaction (4R,5S)-dethiobiotin + (sulfur carrier)-SH + 2 reduced [2Fe-2S]-[ferredoxin] + 2 S-adenosyl-L-methionine = (sulfur carrier)-H + biotin + 2 5'-deoxyadenosine + 2 L-methionine + 2 oxidized [2Fe-2S]-[ferredoxin]. Its pathway is cofactor biosynthesis; biotin biosynthesis; biotin from 7,8-diaminononanoate: step 2/2. Its function is as follows. Catalyzes the conversion of dethiobiotin (DTB) to biotin by the insertion of a sulfur atom into dethiobiotin via a radical-based mechanism. The sequence is that of Biotin synthase from Bacillus cytotoxicus (strain DSM 22905 / CIP 110041 / 391-98 / NVH 391-98).